The sequence spans 282 residues: DNA processing protein DprA (282 aa).

The protein belongs to the DprA/Smf family. Homodimer; forms tail-to-tail dimers, forms nucleoprotein complex (NPC) which requires at least 30 nucleotides (nt) of ssDNA becoming optimal with 50 nt. Interacts with RecA, forms mixed DprA-RecA-ssDNA filaments. Interacts with ComFA and ComFC.

Its subcellular location is the cytoplasm. Functionally, protein that helps load RecA onto ssDNA during transformation. Required for DNA transformation. Not required for DNA uptake but for a later stage of transformation. Thought to interact at the cell pole with newly imported transforming ssDNA which it binds cooperatively, protecting linear and circular ssDNA from nuclease action. Forms bridges between DNA segments. Favors the loading of RecA onto ssDNA and formation of RecA-DNA filaments, triggering RecA-catalysis of ATP-driven homologous DNA pairing. In Streptococcus pneumoniae (strain ATCC BAA-255 / R6), this protein is DNA processing protein DprA.